The following is a 405-amino-acid chain: Serpin I2 (405 aa).

The signal sequence occupies residues 1–18 (MNKTILWSFLLFFSGSQT). N-linked (GlcNAc...) asparagine glycosylation occurs at N306.

The protein belongs to the serpin family. Expressed in pancreas.

It localises to the secreted. The sequence is that of Serpin I2 (Serpini2) from Mus musculus (Mouse).